Reading from the N-terminus, the 288-residue chain is 4-diphosphocytidyl-2-C-methyl-D-erythritol kinase (288 aa).

Residue lysine 8 is part of the active site. 90-100 (PVGAGLAGGSS) lines the ATP pocket. Aspartate 132 is a catalytic residue.

It belongs to the GHMP kinase family. IspE subfamily.

It catalyses the reaction 4-CDP-2-C-methyl-D-erythritol + ATP = 4-CDP-2-C-methyl-D-erythritol 2-phosphate + ADP + H(+). Its pathway is isoprenoid biosynthesis; isopentenyl diphosphate biosynthesis via DXP pathway; isopentenyl diphosphate from 1-deoxy-D-xylulose 5-phosphate: step 3/6. Its function is as follows. Catalyzes the phosphorylation of the position 2 hydroxy group of 4-diphosphocytidyl-2C-methyl-D-erythritol. This chain is 4-diphosphocytidyl-2-C-methyl-D-erythritol kinase, found in Chlamydia trachomatis serovar D (strain ATCC VR-885 / DSM 19411 / UW-3/Cx).